Reading from the N-terminus, the 152-residue chain is 2-C-methyl-D-erythritol 2,4-cyclodiphosphate synthase (152 aa).

Residues Asp8 and His10 each contribute to the a divalent metal cation site. 4-CDP-2-C-methyl-D-erythritol 2-phosphate-binding positions include 8-10 (DSH) and 34-35 (HS). A divalent metal cation is bound at residue His42. 4-CDP-2-C-methyl-D-erythritol 2-phosphate-binding positions include 56 to 58 (DIG) and 61 to 65 (FPDTD).

Belongs to the IspF family. Homotrimer. Requires a divalent metal cation as cofactor.

The enzyme catalyses 4-CDP-2-C-methyl-D-erythritol 2-phosphate = 2-C-methyl-D-erythritol 2,4-cyclic diphosphate + CMP. It functions in the pathway isoprenoid biosynthesis; isopentenyl diphosphate biosynthesis via DXP pathway; isopentenyl diphosphate from 1-deoxy-D-xylulose 5-phosphate: step 4/6. Functionally, involved in the biosynthesis of isopentenyl diphosphate (IPP) and dimethylallyl diphosphate (DMAPP), two major building blocks of isoprenoid compounds. Catalyzes the conversion of 4-diphosphocytidyl-2-C-methyl-D-erythritol 2-phosphate (CDP-ME2P) to 2-C-methyl-D-erythritol 2,4-cyclodiphosphate (ME-CPP) with a corresponding release of cytidine 5-monophosphate (CMP). This Thermus thermophilus (strain ATCC BAA-163 / DSM 7039 / HB27) protein is 2-C-methyl-D-erythritol 2,4-cyclodiphosphate synthase.